The following is a 188-amino-acid chain: dCTP deaminase (188 aa).

Residues 111-116 (KSTYAR), 135-137 (TLE), Gln-156, Tyr-170, and Gln-180 each bind dCTP. Catalysis depends on Glu-137, which acts as the Proton donor/acceptor.

This sequence belongs to the dCTP deaminase family. Homotrimer.

The catalysed reaction is dCTP + H2O + H(+) = dUTP + NH4(+). The protein operates within pyrimidine metabolism; dUMP biosynthesis; dUMP from dCTP (dUTP route): step 1/2. Functionally, catalyzes the deamination of dCTP to dUTP. This Dechloromonas aromatica (strain RCB) protein is dCTP deaminase.